The following is a 421-amino-acid chain: Shaggy-related protein kinase kappa (421 aa).

Residues 1-10 (MASSGLGNGV) show a composition bias toward gly residues. The disordered stretch occupies residues 1–60 (MASSGLGNGVGTSRSAKGLKSSSSSVDWLTRDLAETRIRDKVETDDERDSEPDIIDGAGA). Positions 29 to 42 (LTRDLAETRIRDKV) are enriched in basic and acidic residues. Residues 43–54 (ETDDERDSEPDI) show a composition bias toward acidic residues. A Protein kinase domain is found at 83 to 367 (YISEHVVGTG…ALEACIHPLF (285 aa)). Residues 89-97 (VGTGSFGMV) and Lys-112 each bind ATP. The Proton acceptor role is filled by Asp-208. Tyr-243 is subject to Phosphotyrosine.

It belongs to the protein kinase superfamily. CMGC Ser/Thr protein kinase family. GSK-3 subfamily. Autophosphorylated mainly on threonine and serine residues. As to expression, expressed exclusively in inflorescences.

The enzyme catalyses L-seryl-[protein] + ATP = O-phospho-L-seryl-[protein] + ADP + H(+). It carries out the reaction L-threonyl-[protein] + ATP = O-phospho-L-threonyl-[protein] + ADP + H(+). In terms of biological role, may mediate extracellular signals to regulate transcription in differentiating cells. This is Shaggy-related protein kinase kappa (ASK10) from Arabidopsis thaliana (Mouse-ear cress).